The primary structure comprises 449 residues: Glucose-6-phosphate isomerase (449 aa).

The active-site Proton donor is glutamate 291. Active-site residues include histidine 312 and lysine 426.

The protein belongs to the GPI family.

Its subcellular location is the cytoplasm. The enzyme catalyses alpha-D-glucose 6-phosphate = beta-D-fructose 6-phosphate. It participates in carbohydrate biosynthesis; gluconeogenesis. The protein operates within carbohydrate degradation; glycolysis; D-glyceraldehyde 3-phosphate and glycerone phosphate from D-glucose: step 2/4. Catalyzes the reversible isomerization of glucose-6-phosphate to fructose-6-phosphate. This Streptococcus pneumoniae serotype 4 (strain ATCC BAA-334 / TIGR4) protein is Glucose-6-phosphate isomerase.